We begin with the raw amino-acid sequence, 356 residues long: Riboflavin biosynthesis protein RibD (356 aa).

Residues 1–148 form a deaminase region; it reads MIREIDKNYM…EDFFTYITQE (148 aa). The CMP/dCMP-type deaminase domain maps to 4–126; the sequence is EIDKNYMKLA…KLRNAGIEVD (123 aa). His53 is a Zn(2+) binding site. Glu55 functions as the Proton donor in the catalytic mechanism. 2 residues coordinate Zn(2+): Cys78 and Cys87. Residues 149–356 form a reductase region; the sequence is RPYITLKWAQ…EDLVIFFKRY (208 aa). Ala157 is an NADP(+) binding site. Ser171 serves as a coordination point for substrate. Trp173 contributes to the NADP(+) binding site. Arg187 provides a ligand contact to substrate. Thr199 and Asp203 together coordinate NADP(+). Residues Leu207, Arg210, and Glu290 each contribute to the substrate site. 292–298 contributes to the NADP(+) binding site; sequence GPRTLTS.

In the N-terminal section; belongs to the cytidine and deoxycytidylate deaminase family. This sequence in the C-terminal section; belongs to the HTP reductase family. Requires Zn(2+) as cofactor.

The catalysed reaction is 2,5-diamino-6-hydroxy-4-(5-phosphoribosylamino)-pyrimidine + H2O + H(+) = 5-amino-6-(5-phospho-D-ribosylamino)uracil + NH4(+). The enzyme catalyses 5-amino-6-(5-phospho-D-ribitylamino)uracil + NADP(+) = 5-amino-6-(5-phospho-D-ribosylamino)uracil + NADPH + H(+). It participates in cofactor biosynthesis; riboflavin biosynthesis; 5-amino-6-(D-ribitylamino)uracil from GTP: step 2/4. The protein operates within cofactor biosynthesis; riboflavin biosynthesis; 5-amino-6-(D-ribitylamino)uracil from GTP: step 3/4. Functionally, converts 2,5-diamino-6-(ribosylamino)-4(3h)-pyrimidinone 5'-phosphate into 5-amino-6-(ribosylamino)-2,4(1h,3h)-pyrimidinedione 5'-phosphate. This is Riboflavin biosynthesis protein RibD (ribD) from Aquifex aeolicus (strain VF5).